We begin with the raw amino-acid sequence, 172 residues long: 3-hydroxydecanoyl-[acyl-carrier-protein] dehydratase (172 aa).

Residue histidine 71 is part of the active site.

This sequence belongs to the thioester dehydratase family. FabA subfamily. Homodimer.

The protein localises to the cytoplasm. The enzyme catalyses a (3R)-hydroxyacyl-[ACP] = a (2E)-enoyl-[ACP] + H2O. It carries out the reaction (3R)-hydroxydecanoyl-[ACP] = (2E)-decenoyl-[ACP] + H2O. It catalyses the reaction (2E)-decenoyl-[ACP] = (3Z)-decenoyl-[ACP]. It functions in the pathway lipid metabolism; fatty acid biosynthesis. Functionally, necessary for the introduction of cis unsaturation into fatty acids. Catalyzes the dehydration of (3R)-3-hydroxydecanoyl-ACP to E-(2)-decenoyl-ACP and then its isomerization to Z-(3)-decenoyl-ACP. Can catalyze the dehydratase reaction for beta-hydroxyacyl-ACPs with saturated chain lengths up to 16:0, being most active on intermediate chain length. This chain is 3-hydroxydecanoyl-[acyl-carrier-protein] dehydratase, found in Yersinia pseudotuberculosis serotype O:1b (strain IP 31758).